We begin with the raw amino-acid sequence, 68 residues long: P21 prophage-derived head-stabilizing protein (68 aa).

This sequence belongs to the lambda phage gpW family.

The polypeptide is P21 prophage-derived head-stabilizing protein (Escherichia coli O6:H1 (strain CFT073 / ATCC 700928 / UPEC)).